A 244-amino-acid chain; its full sequence is Agamous-like MADS-box protein AGL13 (244 aa).

The region spanning 3–57 is the MADS-box domain; the sequence is RGKVEVKRIENKITRQVTFSKRKSGLLKKAYELSVLCDAEVSLIIFSTGGKLYEF. The K-box domain occupies 85–175; it reads TQGLRQEVTK…KLETEDHDFK (91 aa).

It is found in the nucleus. Functionally, probable transcription factor. The polypeptide is Agamous-like MADS-box protein AGL13 (AGL13) (Arabidopsis thaliana (Mouse-ear cress)).